We begin with the raw amino-acid sequence, 227 residues long: PKHD-type hydroxylase Bamb_4479 (227 aa).

In terms of domain architecture, Fe2OG dioxygenase spans 80–179; it reads QVYPPLFNRY…RVASFFWVQS (100 aa). Positions 98, 100, and 160 each coordinate Fe cation. Residue Arg-170 coordinates 2-oxoglutarate.

It depends on Fe(2+) as a cofactor. The cofactor is L-ascorbate.

This chain is PKHD-type hydroxylase Bamb_4479, found in Burkholderia ambifaria (strain ATCC BAA-244 / DSM 16087 / CCUG 44356 / LMG 19182 / AMMD) (Burkholderia cepacia (strain AMMD)).